The chain runs to 428 residues: Flotillin-2 (428 aa).

A lipid anchor (N-myristoyl glycine) is attached at glycine 2. The S-palmitoyl cysteine; by ZDHHC5 moiety is linked to residue cysteine 4. A lipid anchor (S-palmitoyl cysteine) is attached at cysteine 19. A lipid anchor (S-palmitoyl cysteine; by ZDHHC5) is attached at cysteine 20. Serine 405 carries the phosphoserine modification.

Belongs to the band 7/mec-2 family. Flotillin subfamily. As to quaternary structure, heterooligomeric complex of flotillin-1 and flotillin-2 and caveolin-1 and caveolin-2. Interacts with ECPAS. Post-translationally, ZDHHC5-catalyzed palmitoylation may be required for the formation of higher-order complexes and for neurite outgrowth in cultured neural stem cells. In terms of tissue distribution, expressed in many tissues, including suprabasal epidermis, hair follicles, heart, lung, thymus, spleen, liver, kidney and brain. Not expressed in skeletal muscle.

Its subcellular location is the cell membrane. It is found in the membrane. It localises to the caveola. The protein localises to the endosome. Functionally, may act as a scaffolding protein within caveolar membranes, functionally participating in formation of caveolae or caveolae-like vesicles. May be involved in epidermal cell adhesion and epidermal structure and function. This is Flotillin-2 (Flot2) from Mus musculus (Mouse).